The chain runs to 440 residues: Transposon TyH3 Gag polyprotein (440 aa).

Polar residues-rich tracts occupy residues 1-23, 48-60, and 127-152; these read MESQ…SVTS, TKAN…TPAS, and QSQF…GNTF. Disordered stretches follow at residues 1–93, 126–173, and 352–440; these read MESQ…MMTQ, PQSQ…RPPP, and GSRN…PETY. Residues 153-165 show a composition bias toward low complexity; the sequence is TDSSSADSDMTST. The RNA-binding stretch occupies residues 299-401; it reads NNGIHINNKV…NSKSKTARAH (103 aa). Over residues 402–418 the composition is skewed to low complexity; it reads NVSTSNNSPSTDNDSIS. At serine 416 the chain carries Phosphoserine. Polar residues predominate over residues 419–428; it reads KSTTEPIQLN. Residues 429–440 are compositionally biased toward basic and acidic residues; it reads NKHDLHLRPETY.

As to quaternary structure, homotrimer.

Its subcellular location is the cytoplasm. Functionally, capsid protein (CA) is the structural component of the virus-like particle (VLP), forming the shell that encapsulates the retrotransposons dimeric RNA genome. The particles are assembled from trimer-clustered units and there are holes in the capsid shells that allow for the diffusion of macromolecules. CA also has nucleocapsid-like chaperone activity, promoting primer tRNA(i)-Met annealing to the multipartite primer-binding site (PBS), dimerization of Ty1 RNA and initiation of reverse transcription. This chain is Transposon TyH3 Gag polyprotein (TY1A), found in Saccharomyces cerevisiae (Baker's yeast).